Consider the following 1405-residue polypeptide: DNA-directed RNA polymerase subunit beta' (1405 aa).

4 residues coordinate Zn(2+): Cys-70, Cys-72, Cys-85, and Cys-88. 3 residues coordinate Mg(2+): Asp-460, Asp-462, and Asp-464. Residues Cys-814, Cys-888, Cys-895, and Cys-898 each contribute to the Zn(2+) site.

Belongs to the RNA polymerase beta' chain family. As to quaternary structure, the RNAP catalytic core consists of 2 alpha, 1 beta, 1 beta' and 1 omega subunit. When a sigma factor is associated with the core the holoenzyme is formed, which can initiate transcription. Mg(2+) serves as cofactor. The cofactor is Zn(2+).

It catalyses the reaction RNA(n) + a ribonucleoside 5'-triphosphate = RNA(n+1) + diphosphate. DNA-dependent RNA polymerase catalyzes the transcription of DNA into RNA using the four ribonucleoside triphosphates as substrates. This is DNA-directed RNA polymerase subunit beta' from Shewanella putrefaciens (strain CN-32 / ATCC BAA-453).